The primary structure comprises 680 residues: Protein terminal ear1 homolog (680 aa).

The 73-residue stretch at 223-295 (SLVVLNSLPA…RRLVVEYTRP (73 aa)) folds into the RRM domain. Disordered stretches follow at residues 294-415 (RPSL…SWRG) and 593-680 (TEPV…GYTD). 2 stretches are compositionally biased toward low complexity: residues 328–340 (PSQSAQPSSSGSG) and 379–403 (SAAAACSTAASASSSTATAPSKQSQ). Positions 404 to 413 (KGGGGRGGSW) are enriched in gly residues. 2 stretches are compositionally biased toward low complexity: residues 602-621 (SPAPSSASGASSPPKSCAAS) and 634-648 (SSSGDGASSASSSNA). The segment covering 656-666 (HGETGGDRGDD) has biased composition (basic and acidic residues).

In terms of tissue distribution, highly expressed in shoot apex and inflorescence apex, at intermediate levels in roots and at low levels in leaf blade and leaf sheath.

Its function is as follows. Probable RNA-binding protein. Involved in the regular timing (plastochron) of lateral organs formation. May regulate the rate of leaf initiation and the duration of vegetative phase. Seems to be redundant to the function of PLASTOCHRON1, but to act in an independent pathway. The polypeptide is Protein terminal ear1 homolog (PLA2) (Oryza sativa subsp. indica (Rice)).